We begin with the raw amino-acid sequence, 156 residues long: Small ribosomal subunit protein uS7 (156 aa).

It belongs to the universal ribosomal protein uS7 family. Part of the 30S ribosomal subunit. Contacts proteins S9 and S11.

Functionally, one of the primary rRNA binding proteins, it binds directly to 16S rRNA where it nucleates assembly of the head domain of the 30S subunit. Is located at the subunit interface close to the decoding center, probably blocks exit of the E-site tRNA. This is Small ribosomal subunit protein uS7 from Clostridium botulinum (strain Alaska E43 / Type E3).